The sequence spans 843 residues: Translation initiation factor IF-2 (843 aa).

Residues Tyr198–Lys219 form a disordered region. Residues Ser207–Lys219 are compositionally biased toward basic residues. The 168-residue stretch at Ser345–Glu512 folds into the tr-type G domain. Residues Gly354 to Thr361 form a G1 region. GTP is bound at residue Gly354–Thr361. The G2 stretch occupies residues Gly379 to His383. The segment at Asp400–Gly403 is G3. GTP contacts are provided by residues Asp400 to His404 and Asn454 to Asp457. The tract at residues Asn454–Asp457 is G4. Positions Ser490–Lys492 are G5.

It belongs to the TRAFAC class translation factor GTPase superfamily. Classic translation factor GTPase family. IF-2 subfamily.

The protein resides in the cytoplasm. Functionally, one of the essential components for the initiation of protein synthesis. Protects formylmethionyl-tRNA from spontaneous hydrolysis and promotes its binding to the 30S ribosomal subunits. Also involved in the hydrolysis of GTP during the formation of the 70S ribosomal complex. This Francisella tularensis subsp. tularensis (strain WY96-3418) protein is Translation initiation factor IF-2.